A 273-amino-acid chain; its full sequence is MGLHESQDSTIYELIEFILDDLIQFINVTELGKEIFPIATFFDKNDIIRTLMEEKIDFYSRSVDNKVIVNFDEDIFRYLINLEEFDINAEDKNGNTLLHAAIDQGKSEVVKFLTSYKNLEVNTKDLGGNSPLHLAIKSNNPEIVEMLLSYENINVNEKDKYGDTTLHKAIRSYNHKIIEMLLLREEIDVNEKDNQGETPLHGAVKSNRPEIVKMLLSHKNMDTKQKEIFSFLEISREDEAKTPINDGVSILGASEAESYGESLHNKDASSYSL.

ANK repeat units follow at residues 31 to 60 (LGKE…DFYS), 93 to 123 (NGNT…EVNT), 127 to 157 (GGNS…NVNE), 161 to 191 (YGDT…DVNE), and 195 to 225 (QGET…DTKQ).

This Rickettsia bellii (strain RML369-C) protein is Putative ankyrin repeat protein RBE_0317.